Reading from the N-terminus, the 539-residue chain is CTP synthase (539 aa).

The amidoligase domain stretch occupies residues 1 to 267; the sequence is MTKFIFVTGG…DDLVIKRLDL (267 aa). Residue Ser13 participates in CTP binding. Ser13 lines the UTP pocket. 14–19 lines the ATP pocket; that stretch reads SLGKGI. An L-glutamine-binding site is contributed by Tyr54. Asp71 serves as a coordination point for ATP. Asp71 and Glu141 together coordinate Mg(2+). CTP contacts are provided by residues 148 to 150, 188 to 193, and Lys224; these read DIE and KTKPTQ. Residues 188–193 and Lys224 each bind UTP; that span reads KTKPTQ. 240–242 serves as a coordination point for ATP; it reads RDA. The Glutamine amidotransferase type-1 domain occupies 293–535; sequence TIGLVGKYVS…IEAANKYKEA (243 aa). Gly355 contacts L-glutamine. The active-site Nucleophile; for glutamine hydrolysis is the Cys382. L-glutamine is bound by residues 383–386, Glu406, and Arg463; that span reads LGMQ. Active-site residues include His508 and Glu510.

Belongs to the CTP synthase family. As to quaternary structure, homotetramer.

The catalysed reaction is UTP + L-glutamine + ATP + H2O = CTP + L-glutamate + ADP + phosphate + 2 H(+). The enzyme catalyses L-glutamine + H2O = L-glutamate + NH4(+). It catalyses the reaction UTP + NH4(+) + ATP = CTP + ADP + phosphate + 2 H(+). The protein operates within pyrimidine metabolism; CTP biosynthesis via de novo pathway; CTP from UDP: step 2/2. Its activity is regulated as follows. Allosterically activated by GTP, when glutamine is the substrate; GTP has no effect on the reaction when ammonia is the substrate. The allosteric effector GTP functions by stabilizing the protein conformation that binds the tetrahedral intermediate(s) formed during glutamine hydrolysis. Inhibited by the product CTP, via allosteric rather than competitive inhibition. Its function is as follows. Catalyzes the ATP-dependent amination of UTP to CTP with either L-glutamine or ammonia as the source of nitrogen. Regulates intracellular CTP levels through interactions with the four ribonucleotide triphosphates. This chain is CTP synthase, found in Staphylococcus carnosus (strain TM300).